The primary structure comprises 758 residues: Microtubule-associated protein tau (758 aa).

Positions 1-26 (MAEPRQEFEVMEDHAGTYGLGDRKDQ) are enriched in basic and acidic residues. The interval 1-573 (MAEPRQEFEV…PVPMPDLKNV (573 aa)) is disordered. An N-acetylalanine modification is found at alanine 2. A Phosphotyrosine; by FYN modification is found at tyrosine 18. Tyrosine 29 carries the phosphotyrosine modification. Lysine 44 is covalently cross-linked (Glycyl lysine isopeptide (Lys-Gly) (interchain with G-Cter in ubiquitin)). 2 positions are modified to phosphoserine: serine 46 and serine 61. The span at 61 to 71 (SETSDAKSTPT) shows a compositional bias: polar residues. 2 positions are modified to phosphothreonine: threonine 69 and threonine 71. Residue lysine 87 is glycosylated (N-linked (Glc) (glycation) lysine; in PHF-tau; in vitro). Threonine 111 bears the Phosphothreonine mark. Composition is skewed to basic and acidic residues over residues 179 to 189 (EGGRHAPELLK) and 207 to 216 (GGKERPGSKE). Position 214 is a phosphoserine; by SGK1 (serine 214). The span at 217 to 228 (EVDEDRDVDESS) shows a compositional bias: acidic residues. Positions 314–323 (EQAHSEEHLG) are enriched in basic and acidic residues. Positions 324–340 (RAAFPGAPGEGPEARGP) are enriched in low complexity. 2 stretches are compositionally biased toward basic and acidic residues: residues 344 to 356 (EDTKEADLPEPSE) and 381 to 393 (KSKDGTGSDDKKA). Lysine 383 carries N-linked (Glc) (glycation) lysine; in PHF-tau; in vitro glycosylation. Over residues 442–453 (VSSVTSRTGSSG) the composition is skewed to low complexity. A compositionally biased stretch (basic and acidic residues) spans 455–466 (KEMKLKGADGKT). The N-linked (Glc) (glycation) lysine; in PHF-tau; in vitro glycan is linked to lysine 467. Threonine 470 carries the phosphothreonine; by PDPK1 modification. Arginine 472 is subject to Omega-N-methylarginine. Lysine 480 is a glycosylation site (N-linked (Glc) (glycation) lysine; in PHF-tau; in vitro). Lysine 480 bears the N6,N6-dimethyllysine; alternate mark. Lysine 480 is subject to N6-acetyllysine; alternate. Asparagine 484 is subject to Deamidated asparagine; in tau and PHF-tau; partial. Residue threonine 486 is modified to Phosphothreonine. N-linked (Glc) (glycation) lysine; in PHF-tau; in vitro glycosylation is present at lysine 491. The span at 491 to 503 (KTPPAPKTPPSSG) shows a compositional bias: pro residues. Threonine 492 bears the Phosphothreonine mark. Threonine 498 is subject to Phosphothreonine; by PDPK1. Residues serine 502, serine 508, and serine 512 each carry the phosphoserine modification. Over residues 504–531 (EPPKSGDRSGYSSPGSPGTPGSRSRTPS) the composition is skewed to low complexity. Residue tyrosine 514 is modified to Phosphotyrosine; by TTBK1. Phosphoserine; by PDPK1 and TTBK1 is present on residues serine 515 and serine 516. The residue at position 519 (serine 519) is a Phosphoserine; by CK1, PDPK1 and TTBK1. The residue at position 522 (threonine 522) is a Phosphothreonine; by CK1 and PDPK1. Serine 525 carries an O-linked (GlcNAc) serine glycan. At threonine 529 the chain carries Phosphothreonine; by BRSK1, BRSK2, DYRK2 and PDPK1. Serine 531 is subject to Phosphoserine; by PKA. Threonine 534 bears the Phosphothreonine; by PDPK1 mark. Lysine 542 carries N-linked (Glc) (glycation) lysine; in PHF-tau; in vitro glycosylation. Position 542 is an N6-acetyllysine (lysine 542). The residue at position 548 (threonine 548) is a Phosphothreonine; by GSK3-beta and PDPK1. A glycan (N-linked (Glc) (glycation) lysine; in PHF-tau; in vitro) is linked at lysine 551. Position 552 is a phosphoserine; by PDPK1 (serine 552). Serine 554 is modified (phosphoserine; by PHK). Serine 555 is a glycosylation site (O-linked (GlcNAc) serine). 4 Tau/MAP repeats span residues 561–591 (QTAPVPMPDLKNVKSKIGSTENLKHQPGGGK), 592–622 (VQIINKKLDLSNVQSKCGSKDNIKHVPGGGS), 623–653 (VQIVYKPVDLSKVTSKCGSLGNIHHKPGGGQ), and 654–685 (VEVKSEKLDFKDRVQSKIGSLDNITHVPGGGN). The tract at residues 561 to 685 (QTAPVPMPDL…NITHVPGGGN (125 aa)) is microtubule-binding domain. Lysine 571 participates in a covalent cross-link: Glycyl lysine isopeptide (Lys-Gly) (interchain with G-Cter in ubiquitin); in PHF-tau. Residue lysine 576 is glycosylated (N-linked (Glc) (glycation) lysine; in PHF-tau; in vitro). Lysine 576 is subject to N6-acetyllysine; alternate. Position 576 is an N6-methyllysine; alternate (lysine 576). A Glycyl lysine isopeptide (Lys-Gly) (interchain with G-Cter in ubiquitin); alternate cross-link involves residue lysine 576. Serine 579 is modified (phosphoserine; by MARK1, MARK2, MARK3, MARK4, BRSK1, BRSK2 and PHK). Residue lysine 584 forms a Glycyl lysine isopeptide (Lys-Gly) (interchain with G-Cter in ubiquitin) linkage. Asparagine 596 carries the post-translational modification Deamidated asparagine; in tau and PHF-tau; partial. Residues lysine 597 and lysine 598 are each glycosylated (N-linked (Glc) (glycation) lysine; in PHF-tau; in vitro). At lysine 598 the chain carries N6-acetyllysine; alternate. Lysine 598 participates in a covalent cross-link: Glycyl lysine isopeptide (Lys-Gly) (interchain with G-Cter in ubiquitin); alternate. Serine 602 bears the Phosphoserine; by PHK mark. The residue at position 607 (lysine 607) is an N6-acetyllysine. Cysteine 608 and cysteine 639 are oxidised to a cystine. Residue serine 610 is modified to Phosphoserine. At lysine 615 the chain carries N6-acetyllysine; alternate. Residue lysine 615 forms a Glycyl lysine isopeptide (Lys-Gly) (interchain with G-Cter in ubiquitin); alternate linkage. Serine 622 bears the Phosphoserine; by PHK mark. Position 628 is an N6,N6-dimethyllysine; alternate (lysine 628). Lysine 628, lysine 634, and lysine 638 each carry N6-acetyllysine; alternate. Lysine 628 participates in a covalent cross-link: Glycyl lysine isopeptide (Lys-Gly) (interchain with G-Cter in ubiquitin); in PHF-tau. Glycyl lysine isopeptide (Lys-Gly) (interchain with G-Cter in ubiquitin); alternate cross-links involve residues lysine 634 and lysine 638. Serine 641 bears the Phosphoserine mark. 3 positions are modified to N6-acetyllysine; alternate: lysine 648, lysine 660, and lysine 664. Residues lysine 648, lysine 660, and lysine 664 each participate in a glycyl lysine isopeptide (Lys-Gly) (interchain with G-Cter in ubiquitin); alternate cross-link. N-linked (Glc) (glycation) lysine; in PHF-tau; in vitro glycosylation occurs at lysine 664. The residue at position 666 (arginine 666) is an Omega-N-methylarginine. Serine 669 is modified (phosphoserine; by PHK). N-linked (Glc) (glycation) lysine; in PHF-tau; in vitro glycosylation occurs at lysine 670. A Glycyl lysine isopeptide (Lys-Gly) (interchain with G-Cter in ubiquitin); in PHF-tau cross-link involves residue lysine 670. Position 673 is a phosphoserine (serine 673). An N-linked (Glc) (glycation) lysine; in PHF-tau; in vitro glycan is attached at lysine 686. Residue lysine 686 is modified to N6-acetyllysine; alternate. Residue lysine 686 forms a Glycyl lysine isopeptide (Lys-Gly) (interchain with G-Cter in ubiquitin); alternate linkage. Lysine 692 participates in a covalent cross-link: Glycyl lysine isopeptide (Lys-Gly) (interchain with G-Cter in ubiquitin). The residue at position 702 (lysine 702) is an N6-acetyllysine; alternate. Lysine 702 is covalently cross-linked (Glycyl lysine isopeptide (Lys-Gly) (interchain with G-Cter in ubiquitin); alternate). Position 711 is a phosphotyrosine (tyrosine 711). Serine 713 is subject to Phosphoserine; by CK1 and PDPK1. The tract at residues 715–734 (VVSGDTSPRHLSNVSSTGSI) is disordered. Serine 717 bears the Phosphoserine; alternate mark. Serine 717 carries O-linked (GlcNAc) serine; alternate glycosylation. The segment covering 718–733 (GDTSPRHLSNVSSTGS) has biased composition (polar residues). The residue at position 720 (threonine 720) is a Phosphothreonine. Serine 721 is subject to Phosphoserine; by CK1 and PDPK1. At serine 726 the chain carries Phosphoserine. Serine 733 is modified (phosphoserine; by CaMK2 and TTBK1). Serine 739 carries the post-translational modification Phosphoserine; by PDPK1 and TTBK1. Threonine 744 carries the post-translational modification Phosphothreonine; by TTBK1.

As to quaternary structure, interacts with MARK1, MARK2, MARK3 and MARK4. Interacts with PSMC2 through SQSTM1. Interacts with SQSTM1 when polyubiquitinated. Interacts with FKBP4. Binds to CSNK1D. Interacts with SGK1. Interacts with EPM2A; the interaction dephosphorylates MAPT at Ser-396. Interacts with PIN1. Interacts with LRRK2. Interacts with LRP1, leading to endocytosis; this interaction is reduced in the presence of LRPAP1/RAP. Phosphorylation at serine and threonine residues in S-P or T-P motifs by proline-directed protein kinases (PDPK1, CDK1, CDK5, GSK3, MAPK) (only 2-3 sites per protein in interphase, seven-fold increase in mitosis, and in the form associated with paired helical filaments (PHF-tau)), and at serine residues in K-X-G-S motifs by MAP/microtubule affinity-regulating kinase (MARK1, MARK2, MARK3 or MARK4), causing detachment from microtubules, and their disassembly. Phosphorylation decreases with age. Phosphorylation within tau/MAP's repeat domain or in flanking regions seems to reduce tau/MAP's interaction with, respectively, microtubules or plasma membrane components. Phosphorylation on Ser-610, Ser-622, Ser-641 and Ser-673 in several isoforms during mitosis. Phosphorylation at Ser-548 by GSK3B reduces ability to bind and stabilize microtubules. Phosphorylation at Ser-579 by BRSK1 and BRSK2 in neurons affects ability to bind microtubules and plays a role in neuron polarization. Phosphorylated at Ser-554, Ser-579, Ser-602, Ser-606 and Ser-669 by PHK. Phosphorylation at Ser-214 by SGK1 mediates microtubule depolymerization and neurite formation in hippocampal neurons. There is a reciprocal down-regulation of phosphorylation and O-GlcNAcylation. Phosphorylation on Ser-717 completely abolishes the O-GlcNAcylation on this site, while phosphorylation on Ser-713 and Ser-721 reduces glycosylation by a factor of 2 and 4 respectively. Phosphorylation on Ser-721 is reduced by about 41.5% by GlcNAcylation on Ser-717. Dephosphorylated at several serine and threonine residues by the serine/threonine phosphatase PPP5C. Post-translationally, polyubiquitinated. Requires functional TRAF6 and may provoke SQSTM1-dependent degradation by the proteasome. PHF-tau can be modified by three different forms of polyubiquitination. 'Lys-48'-linked polyubiquitination is the major form, 'Lys-6'-linked and 'Lys-11'-linked polyubiquitination also occur. In terms of processing, O-glycosylated. O-GlcNAcylation content is around 8.2%. There is reciprocal down-regulation of phosphorylation and O-GlcNAcylation. Phosphorylation on Ser-717 completely abolishes the O-GlcNAcylation on this site, while phosphorylation on Ser-713 and Ser-721 reduces O-GlcNAcylation by a factor of 2 and 4 respectively. O-GlcNAcylation on Ser-717 decreases the phosphorylation on Ser-721 by about 41.5%. Glycation of PHF-tau, but not normal brain TAU/MAPT. Glycation is a non-enzymatic post-translational modification that involves a covalent linkage between a sugar and an amino group of a protein molecule forming ketoamine. Subsequent oxidation, fragmentation and/or cross-linking of ketoamine leads to the production of advanced glycation endproducts (AGES). Glycation may play a role in stabilizing PHF aggregation leading to tangle formation in AD. In terms of tissue distribution, expressed in neurons. Isoform PNS-tau is expressed in the peripheral nervous system while the others are expressed in the central nervous system.

It is found in the cytoplasm. It localises to the cytosol. The protein resides in the cell membrane. Its subcellular location is the cytoskeleton. The protein localises to the cell projection. It is found in the axon. It localises to the dendrite. The protein resides in the secreted. Its function is as follows. Promotes microtubule assembly and stability, and might be involved in the establishment and maintenance of neuronal polarity. The C-terminus binds axonal microtubules while the N-terminus binds neural plasma membrane components, suggesting that tau functions as a linker protein between both. Axonal polarity is predetermined by TAU/MAPT localization (in the neuronal cell) in the domain of the cell body defined by the centrosome. The short isoforms allow plasticity of the cytoskeleton whereas the longer isoforms may preferentially play a role in its stabilization. This Homo sapiens (Human) protein is Microtubule-associated protein tau.